We begin with the raw amino-acid sequence, 411 residues long: Argininosuccinate synthase (411 aa).

ATP-binding positions include 10 to 18 and alanine 37; that span reads AYSGGLDTS. L-citrulline-binding residues include tyrosine 89 and serine 94. Glycine 119 serves as a coordination point for ATP. Positions 121, 125, and 126 each coordinate L-aspartate. Asparagine 125 provides a ligand contact to L-citrulline. 5 residues coordinate L-citrulline: arginine 129, serine 178, serine 187, glutamate 263, and tyrosine 275.

The protein belongs to the argininosuccinate synthase family. Type 1 subfamily. Homotetramer.

It is found in the cytoplasm. The enzyme catalyses L-citrulline + L-aspartate + ATP = 2-(N(omega)-L-arginino)succinate + AMP + diphosphate + H(+). It functions in the pathway amino-acid biosynthesis; L-arginine biosynthesis; L-arginine from L-ornithine and carbamoyl phosphate: step 2/3. The sequence is that of Argininosuccinate synthase from Aeromonas hydrophila subsp. hydrophila (strain ATCC 7966 / DSM 30187 / BCRC 13018 / CCUG 14551 / JCM 1027 / KCTC 2358 / NCIMB 9240 / NCTC 8049).